Reading from the N-terminus, the 289-residue chain is Agmatinase (289 aa).

The Mn(2+) site is built by His112, Asp135, His137, Asp139, Asp216, and Asp218.

Belongs to the arginase family. Agmatinase subfamily. The cofactor is Mn(2+).

The catalysed reaction is agmatine + H2O = urea + putrescine. Its pathway is amine and polyamine biosynthesis; putrescine biosynthesis via agmatine pathway; putrescine from agmatine: step 1/1. Its function is as follows. Catalyzes the formation of putrescine from agmatine. This chain is Agmatinase (speB), found in Halalkalibacterium halodurans (strain ATCC BAA-125 / DSM 18197 / FERM 7344 / JCM 9153 / C-125) (Bacillus halodurans).